The sequence spans 426 residues: Citrate synthase (426 aa).

Active-site residues include His-314 and Asp-372.

Belongs to the citrate synthase family.

The enzyme catalyses oxaloacetate + acetyl-CoA + H2O = citrate + CoA + H(+). It participates in carbohydrate metabolism; tricarboxylic acid cycle; isocitrate from oxaloacetate: step 1/2. The sequence is that of Citrate synthase (gltA) from Helicobacter pylori (strain J99 / ATCC 700824) (Campylobacter pylori J99).